The chain runs to 77 residues: Sec-independent protein translocase protein TatA (77 aa).

The helical transmembrane segment at 1 to 21 (MGSFSIWHWLVVLAIVVLVFG) threads the bilayer. The disordered stretch occupies residues 40-77 (KEGMKGAEEENTQPPPSHQQVTGHSIKSEIEEKDQTKV). Basic and acidic residues predominate over residues 65–77 (IKSEIEEKDQTKV).

This sequence belongs to the TatA/E family. As to quaternary structure, the Tat system comprises two distinct complexes: a TatABC complex, containing multiple copies of TatA, TatB and TatC subunits, and a separate TatA complex, containing only TatA subunits. Substrates initially bind to the TatABC complex, which probably triggers association of the separate TatA complex to form the active translocon.

Its subcellular location is the cell inner membrane. Functionally, part of the twin-arginine translocation (Tat) system that transports large folded proteins containing a characteristic twin-arginine motif in their signal peptide across membranes. TatA could form the protein-conducting channel of the Tat system. The protein is Sec-independent protein translocase protein TatA of Nitrosomonas eutropha (strain DSM 101675 / C91 / Nm57).